The chain runs to 295 residues: 33 kDa chaperonin (295 aa).

2 disulfide bridges follow: Cys237-Cys239 and Cys270-Cys273.

It belongs to the HSP33 family. Post-translationally, under oxidizing conditions two disulfide bonds are formed involving the reactive cysteines. Under reducing conditions zinc is bound to the reactive cysteines and the protein is inactive.

It localises to the cytoplasm. Functionally, redox regulated molecular chaperone. Protects both thermally unfolding and oxidatively damaged proteins from irreversible aggregation. Plays an important role in the bacterial defense system toward oxidative stress. This is 33 kDa chaperonin from Shouchella clausii (strain KSM-K16) (Alkalihalobacillus clausii).